The primary structure comprises 280 residues: Golgi phosphoprotein 3-like (280 aa).

Residues 1-30 (MTTLTRRGRRADVGQENRVDSEDYIKDKDE) form a disordered region. Basic and acidic residues predominate over residues 10–30 (RADVGQENRVDSEDYIKDKDE). The a 1,2-diacyl-sn-glycero-3-phospho-(1D-myo-inositol 4-phosphate) site is built by Trp62, Arg71, Arg152, and Arg155. Positions 171 to 182 (EKQNFLLFDMTT) are beta-hairpin required for oligomerization.

It belongs to the GOLPH3/VPS74 family. As to quaternary structure, homooligomer.

The protein resides in the golgi apparatus. It localises to the golgi stack membrane. Its subcellular location is the trans-Golgi network membrane. Its function is as follows. Phosphatidylinositol-4-phosphate-binding protein that may play a role in the process of vesicle budding at the Golgi and anterograde transport to the plasma membrane. This Xenopus tropicalis (Western clawed frog) protein is Golgi phosphoprotein 3-like (golph3l).